The primary structure comprises 444 residues: Tol-Pal system protein TolB (444 aa).

Positions 1-19 (MRNIIYFILSLLFSVTSYA) are cleaved as a signal peptide.

It belongs to the TolB family. The Tol-Pal system is composed of five core proteins: the inner membrane proteins TolA, TolQ and TolR, the periplasmic protein TolB and the outer membrane protein Pal. They form a network linking the inner and outer membranes and the peptidoglycan layer.

It localises to the periplasm. Functionally, part of the Tol-Pal system, which plays a role in outer membrane invagination during cell division and is important for maintaining outer membrane integrity. The sequence is that of Tol-Pal system protein TolB from Rickettsia conorii (strain ATCC VR-613 / Malish 7).